The primary structure comprises 58 residues: Small ribosomal subunit protein eS27 (58 aa).

Cysteine 10, cysteine 13, cysteine 29, and cysteine 32 together coordinate Zn(2+). The C4-type zinc-finger motif lies at cysteine 10–cysteine 32.

This sequence belongs to the eukaryotic ribosomal protein eS27 family. Part of the 30S ribosomal subunit. Requires Zn(2+) as cofactor.

This is Small ribosomal subunit protein eS27 from Archaeoglobus fulgidus (strain ATCC 49558 / DSM 4304 / JCM 9628 / NBRC 100126 / VC-16).